Consider the following 139-residue polypeptide: uncharacterized protein (139 aa).

The first 32 residues, 1-32 (MEFHDDKKNELQKKEEIITEAIDTLFQSSAFG), serve as a signal peptide directing secretion. Residues 44–139 (SSLKDVQTTI…TLFFPKNKHE (96 aa)) form the sHSP domain.

This sequence belongs to the small heat shock protein (HSP20) family.

This is an uncharacterized protein from Bacillus subtilis (strain 168).